The following is a 231-amino-acid chain: NADH-ubiquinone oxidoreductase chain 4 (231 aa).

The next 6 helical transmembrane spans lie at 1 to 21 (PIAG…YGII), 34 to 54 (MFLP…LTCL), 61 to 80 (SLIA…AIII), 84 to 106 (WGLT…LFCL), 128 to 148 (ILPM…ATPP), and 169 to 189 (TIIL…HMFL).

Belongs to the complex I subunit 4 family.

The protein localises to the mitochondrion membrane. The enzyme catalyses a ubiquinone + NADH + 5 H(+)(in) = a ubiquinol + NAD(+) + 4 H(+)(out). Its function is as follows. Core subunit of the mitochondrial membrane respiratory chain NADH dehydrogenase (Complex I) that is believed to belong to the minimal assembly required for catalysis. Complex I functions in the transfer of electrons from NADH to the respiratory chain. The immediate electron acceptor for the enzyme is believed to be ubiquinone. The protein is NADH-ubiquinone oxidoreductase chain 4 (MT-ND4) of Atropoides picadoi (Picado's pit viper).